An 878-amino-acid chain; its full sequence is Leucine--tRNA ligase (878 aa).

The 'HIGH' region motif lies at 43–54 (PYPSAQGLHVGH). Positions 634-638 (KMSKA) match the 'KMSKS' region motif. Lys637 serves as a coordination point for ATP.

This sequence belongs to the class-I aminoacyl-tRNA synthetase family.

The protein localises to the cytoplasm. The enzyme catalyses tRNA(Leu) + L-leucine + ATP = L-leucyl-tRNA(Leu) + AMP + diphosphate. The protein is Leucine--tRNA ligase of Treponema pallidum subsp. pallidum (strain SS14).